The following is a 366-amino-acid chain: RNA 3'-terminal phosphate cyclase (366 aa).

Positions 104, 131, 294, 297, 298, and 320 each coordinate ATP. The active-site Tele-AMP-histidine intermediate is histidine 320.

This sequence belongs to the RNA 3'-terminal cyclase family. Type 1 subfamily. In terms of tissue distribution, detected in retinal ganglion cells (RGCs) (at protein level).

The protein localises to the nucleus. It is found in the nucleoplasm. The enzyme catalyses a 3'-end 3'-phospho-ribonucleotide-RNA + ATP = a 3'-end 2',3'-cyclophospho-ribonucleotide-RNA + AMP + diphosphate. Catalyzes the conversion of 3'-phosphate to a 2',3'-cyclic phosphodiester at the end of RNA. The mechanism of action of the enzyme occurs in 3 steps: (A) adenylation of the enzyme by ATP; (B) transfer of adenylate to an RNA-N3'P to produce RNA-N3'PP5'A; (C) and attack of the adjacent 2'-hydroxyl on the 3'-phosphorus in the diester linkage to produce the cyclic end product. Likely functions in some aspects of cellular RNA processing. Function plays an important role in regulating axon regeneration by inhibiting central nervous system (CNS) axon regeneration following optic nerve injury. This chain is RNA 3'-terminal phosphate cyclase, found in Mus musculus (Mouse).